Here is a 38-residue protein sequence, read N- to C-terminus: Photosystem II reaction center protein L (38 aa).

The helical transmembrane segment at S17–F37 threads the bilayer.

This sequence belongs to the PsbL family. PSII is composed of 1 copy each of membrane proteins PsbA, PsbB, PsbC, PsbD, PsbE, PsbF, PsbH, PsbI, PsbJ, PsbK, PsbL, PsbM, PsbT, PsbX, PsbY, PsbZ, Psb30/Ycf12, at least 3 peripheral proteins of the oxygen-evolving complex and a large number of cofactors. It forms dimeric complexes.

The protein localises to the plastid. It localises to the chloroplast thylakoid membrane. Functionally, one of the components of the core complex of photosystem II (PSII). PSII is a light-driven water:plastoquinone oxidoreductase that uses light energy to abstract electrons from H(2)O, generating O(2) and a proton gradient subsequently used for ATP formation. It consists of a core antenna complex that captures photons, and an electron transfer chain that converts photonic excitation into a charge separation. This subunit is found at the monomer-monomer interface and is required for correct PSII assembly and/or dimerization. This Amborella trichopoda protein is Photosystem II reaction center protein L.